The following is a 125-amino-acid chain: Large ribosomal subunit protein bL17 (125 aa).

It belongs to the bacterial ribosomal protein bL17 family. Part of the 50S ribosomal subunit. Contacts protein L32.

This is Large ribosomal subunit protein bL17 from Blochmanniella floridana.